Here is a 519-residue protein sequence, read N- to C-terminus: General transcription factor 3C polypeptide 5 (519 aa).

Ala2 carries the N-acetylalanine modification. The interval 465-519 (ALFSSSAKADGGKEQLTYESGEDEEDEEEEEEEEEDFKPSDGSENEMETEILDYV) is disordered. Composition is skewed to acidic residues over residues 484 to 500 (SGED…EEED) and 507 to 519 (SENE…LDYV).

This sequence belongs to the TFIIIC subunit 5 family. Part of the TFIIIC subcomplex TFIIIC2, consisting of six subunits, GTF3C1, GTF3C2, GTF3C3, GTF3C4, GTF3C5 and GTF3C6. Interacts with BRF1, GTF3C6 and TBP.

It is found in the nucleus. Involved in RNA polymerase III-mediated transcription. Integral, tightly associated component of the DNA-binding TFIIIC2 subcomplex that directly binds tRNA and virus-associated RNA promoters. This Homo sapiens (Human) protein is General transcription factor 3C polypeptide 5 (GTF3C5).